Consider the following 119-residue polypeptide: Succinate dehydrogenase assembly factor 2, mitochondrial (119 aa).

It belongs to the SDHAF2 family. As to quaternary structure, interacts with the flavoprotein subunit within the SDH catalytic dimer.

The protein resides in the mitochondrion matrix. Plays an essential role in the assembly of succinate dehydrogenase (SDH), an enzyme complex (also referred to as respiratory complex II) that is a component of both the tricarboxylic acid (TCA) cycle and the mitochondrial electron transport chain, and which couples the oxidation of succinate to fumarate with the reduction of ubiquinone (coenzyme Q) to ubiquinol. Required for flavinylation (covalent attachment of FAD) of the flavoprotein subunit of the SDH catalytic dimer. The polypeptide is Succinate dehydrogenase assembly factor 2, mitochondrial (Caenorhabditis elegans).